The following is a 1262-amino-acid chain: Isoleucine--tRNA ligase, cytoplasmic (1262 aa).

At methionine 1 the chain carries N-acetylmethionine. Positions 48–58 (PFATGLPHYGH) match the 'HIGH' region motif. The 'KMSKS' region motif lies at 600 to 604 (KMSKR). Lysine 603 serves as a coordination point for ATP. A phosphoserine mark is found at serine 1047 and serine 1049. Residue threonine 1058 is modified to Phosphothreonine.

This sequence belongs to the class-I aminoacyl-tRNA synthetase family. In terms of assembly, part of a multisubunit complex that groups tRNA ligases for Arg (RARS1), Asp (DARS1), Gln (QARS1), Ile (IARS1), Leu (LARS1), Lys (KARS1), Met (MARS1) the bifunctional ligase for Glu and Pro (EPRS1) and the auxiliary subunits AIMP1/p43, AIMP2/p38 and EEF1E1/p18. As to expression, expressed in liver and muscle (at protein level).

The protein resides in the cytoplasm. It is found in the cytosol. It carries out the reaction tRNA(Ile) + L-isoleucine + ATP = L-isoleucyl-tRNA(Ile) + AMP + diphosphate. In terms of biological role, catalyzes the specific attachment of an amino acid to its cognate tRNA in a 2 step reaction: the amino acid (AA) is first activated by ATP to form AA-AMP and then transferred to the acceptor end of the tRNA. This Homo sapiens (Human) protein is Isoleucine--tRNA ligase, cytoplasmic.